The sequence spans 1216 residues: Sodium/potassium/calcium exchanger 1 (1216 aa).

The Extracellular portion of the chain corresponds to 1–446 (MGKLIRMGAQ…DLFSVEERRQ (446 aa)). The disordered stretch occupies residues 94-196 (EATAGRDGTP…KYSPSPLGRM (103 aa)). Polar residues-rich tracts occupy residues 110 to 135 (NTPS…TPTG) and 144 to 166 (SATP…SYTR). Residues Asn-290 and Asn-303 are each glycosylated (N-linked (GlcNAc...) asparagine). A helical transmembrane segment spans residues 447 to 467 (GWVVLHIFGMMYVFVALAIVC). The Cytoplasmic segment spans residues 468 to 491 (DEYFVPALGVITDKLQISEDVAGA). An Alpha-1 repeat occupies 488–528 (VAGATFMAAGGSAPELFTSLIGVFISHSNVGIGTIVGSAVF). A helical membrane pass occupies residues 492–512 (TFMAAGGSAPELFTSLIGVFI). Over 513–518 (SHSNVG) the chain is Extracellular. The helical transmembrane segment at 519–539 (IGTIVGSAVFNILFVIGTCAL) threads the bilayer. Topologically, residues 540 to 557 (FSREILNLTWWPLFRDIT) are cytoplasmic. A helical membrane pass occupies residues 558 to 578 (FYIFDLMMLILFFLDSLIAWW). Position 579 (Glu-579) is a topological domain, extracellular. The chain crosses the membrane as a helical span at residues 580-600 (SVLLLLAYAFYVFTMKWNQQL). Over 601–1024 (ELWVKEQLNK…SLEWPETRRK (424 aa)) the chain is Cytoplasmic. Ser-652 is modified (phosphoserine). A disordered region spans residues 677-1018 (GEARPSKDKE…ENEQPLSLEW (342 aa)). The span at 702-712 (AESKPEEEPAK) shows a compositional bias: basic and acidic residues. The residue at position 717 (Thr-717) is a Phosphothreonine. The 1; approximate repeat unit spans residues 796–811 (DEDEGEIQAEGGEVKG). An 8 X 17 AA tandem repeats of D-E-D-E-G-E-I-Q-A-G-E-[GA]-G-E-V-[EK]-G region spans residues 796–928 (DEDEGEIQAE…QAGEAGEVEG (133 aa)). 6 repeat units span residues 812–828 (DEDE…EVEG), 829–845 (DEDE…EVEG), 846–862 (DEDE…EVEG), 863–879 (DEDE…EVEG), 880–896 (DEDE…EVEG), and 897–913 (DEDE…EVKG). 7 stretches are compositionally biased toward acidic residues: residues 824-834 (GEVEGDEDEGE), 841-851 (GEVEGDEDEGE), 858-868 (GEVEGDEDEGE), 875-885 (GEVEGDEDEGE), 892-902 (GEVEGDEDEGE), 924-941 (GEVE…DEGE), and 981-1011 (GDSE…EENE). One copy of the 8; approximate repeat lies at 914–928 (DEGEIQAGEAGEVEG). A helical transmembrane segment spans residues 1025-1045 (QAIYLFLLPIVFPLWLTVPDV). At 1046–1052 (RRLEAKK) the chain is on the extracellular side. The chain crosses the membrane as a helical span at residues 1053 to 1073 (FFVITFLGSILWIAMFSYLMV). Topologically, residues 1074 to 1088 (WWAHQVGETIGISEE) are cytoplasmic. Residues 1089–1109 (IMGLTILAAGTSIPDLITSVI) traverse the membrane as a helical segment. One copy of the Alpha-2 repeat lies at 1096 to 1127 (AAGTSIPDLITSVIVARKGLGDMAVSSSVGSN). Over 1110–1127 (VARKGLGDMAVSSSVGSN) the chain is Extracellular. The chain crosses the membrane as a helical span at residues 1128–1148 (IFDITVGLPLPWMLFSLINGL). At 1149 to 1157 (QPVAVSSNG) the chain is on the cytoplasmic side. A helical membrane pass occupies residues 1158–1178 (LFCAIVLLFLMLLFVISSIAL). Topologically, residues 1179–1185 (CKWRMNK) are extracellular. Residues 1186–1206 (ILGFTMFLLYFVFLIISVMLE) traverse the membrane as a helical segment. At 1207-1216 (DRIISCPVSV) the chain is on the cytoplasmic side.

This sequence belongs to the Ca(2+):cation antiporter (CaCA) (TC 2.A.19) family. SLC24A subfamily. The uncleaved signal sequence is required for efficient membrane targeting and proper membrane integration and topology. In terms of processing, glycosylated. In terms of tissue distribution, retina.

Its subcellular location is the cell membrane. The catalysed reaction is Ca(2+)(out) + K(+)(out) + 4 Na(+)(in) = Ca(2+)(in) + K(+)(in) + 4 Na(+)(out). In terms of biological role, calcium, potassium:sodium antiporter that transports 1 Ca(2+) and 1 K(+) in exchange for 4 Na(+). Critical component of the visual transduction cascade, controlling the calcium concentration of outer segments during light and darkness. Light causes a rapid lowering of cytosolic free calcium in the outer segment of both retinal rod and cone photoreceptors and the light-induced lowering of calcium is caused by extrusion via this protein which plays a key role in the process of light adaptation. The chain is Sodium/potassium/calcium exchanger 1 (SLC24A1) from Bos taurus (Bovine).